Here is a 180-residue protein sequence, read N- to C-terminus: Chromosome-anchoring protein RacA (180 aa).

Residues 5 to 25 (TPFIAKKLGVSPKAVVRIAQQ) constitute a DNA-binding region (H-T-H motif). The stretch at 67-151 (KASSNEVEEL…LEAALTKEEP (85 aa)) forms a coiled coil.

It belongs to the RacA family.

Its subcellular location is the cytoplasm. In terms of biological role, required for the formation of axial filaments and for anchoring the origin regions at the cell poles in sporulating cells, thus ensuring proper chromosome segregation in the prespore. Binds in a dispersed manner throughout the chromosome but preferentially to sites clustered in the origin portion of the chromosome, causing condensation of the chromosome and its remodeling into an elongated, anchored structure. The protein is Chromosome-anchoring protein RacA of Bacillus cereus (strain B4264).